A 106-amino-acid polypeptide reads, in one-letter code: Large ribosomal subunit protein uL24 (106 aa).

Belongs to the universal ribosomal protein uL24 family. In terms of assembly, part of the 50S ribosomal subunit.

Functionally, one of two assembly initiator proteins, it binds directly to the 5'-end of the 23S rRNA, where it nucleates assembly of the 50S subunit. In terms of biological role, one of the proteins that surrounds the polypeptide exit tunnel on the outside of the subunit. This chain is Large ribosomal subunit protein uL24, found in Delftia acidovorans (strain DSM 14801 / SPH-1).